The chain runs to 488 residues: MPGGRRGPSRQQLSRSALPSLQTLVGGTCGNGTGLRNRNGSAIGLSAPPITALITPEPVRHCHIPELPLDGGLLFEFLFFIYLLVALFIQYINIYKSVWWYPYNHPASCTSLNFHLIDYHLAAFITVMLARRLVWALISEASQVGTSSMVHYAALITARLVLLTLCGWVFCWTLVNLFRNHSVLNLLFLGYPFGVYVPLCCFHQDSRSQPLPTDCGYLVQDPLVDDGANGMATLVRPRDFLSLLRESLREQFNSTPSIPSHSCPLSPDLIRNEVECLKADFNRRIKEVLFNSLFSAYYVAFLPLCFVKSTQYYDMRWSCEHLIMVWINAFVMLSTQLLPPKYCDLLHRSASHLGKWQKLEHGSYSNAPQHIWSENTVWPQGVLVRHSRSLYKAVGPYNVAVPSEVSHARFYFLFHRPLRLLNLLLIIEGSLVLYQLYSLLRAEKWNHTLSIALILFCNYYVLFKLLRDRIVLGRAYSYPISSYGLKPH.

N-linked (GlcNAc...) asparagine glycans are attached at residues asparagine 31 and asparagine 39. The next 3 helical transmembrane spans lie at 72 to 92, 110 to 130, and 155 to 175; these read GLLFEFLFFIYLLVALFIQYI, TSLNFHLIDYHLAAFITVMLA, and LITARLVLLTLCGWVFCWTLV. The N-linked (GlcNAc...) asparagine glycan is linked to asparagine 180. The next 5 membrane-spanning stretches (helical) occupy residues 182–202, 287–307, 319–339, 420–440, and 446–466; these read SVLNLLFLGYPFGVYVPLCCF, EVLFNSLFSAYYVAFLPLCFV, CEHLIMVWINAFVMLSTQLLP, LLNLLLIIEGSLVLYQLYSLL, and NHTLSIALILFCNYYVLFKLL.

It belongs to the TMEM39 family.

It localises to the endoplasmic reticulum membrane. Its function is as follows. Regulates autophagy by controlling the spatial distribution and levels of the intracellular phosphatidylinositol 4-phosphate (PtdIns(4)P) pools. Modulates (PtdIns(4)P) levels by regulating the ER-to-Golgi trafficking of the phosphatidylinositide phosphatase SACM1L. The protein is Transmembrane protein 39A (tmem39a) of Xenopus tropicalis (Western clawed frog).